Reading from the N-terminus, the 439-residue chain is Membrane sensor protein UhpC (439 aa).

Residues 1 to 25 are Cytoplasmic-facing; it reads MLPFLKAPADAPLMTDKYEIDARYR. The chain crosses the membrane as a helical span at residues 26–45; it reads YWRRHILLTIWLGYALFYFT. The Periplasmic portion of the chain corresponds to 46 to 66; it reads RKSFNAAVPEILANGVLSRSD. A helical transmembrane segment spans residues 67–87; sequence IGLLATLFYITYGVSKFVSGI. At 88–95 the chain is on the cytoplasmic side; sequence VSDRSNAR. Residues 96-118 traverse the membrane as a helical segment; that stretch reads YFMGIGLIATGIINILFGFSTSL. Topologically, residues 119-121 are periplasmic; the sequence is WAF. Residues 122–144 form a helical membrane-spanning segment; it reads AVLWVLNAFFQGWGSPVCARLLT. Topologically, residues 145–162 are cytoplasmic; it reads AWYSRTERGGWWALWNTA. Residues 163-183 form a helical membrane-spanning segment; the sequence is HNVGGALIPIVMAAAALHYGW. Arginine 184 is a topological domain (periplasmic). A helical membrane pass occupies residues 185–205; that stretch reads AGMMIAGCMAIVVGIFLCWRL. Residues 206–244 are Cytoplasmic-facing; that stretch reads RDRPQALGLPAVGEWRHDALEIAQQQEGAGLTRKEILTK. Residues 245 to 265 form a helical membrane-spanning segment; sequence YVLLNPYIWLLSFCYVLVYVV. The Periplasmic portion of the chain corresponds to 266 to 289; the sequence is RAAINDWGNLYMSETLGVDLVTAN. Residues 290–310 traverse the membrane as a helical segment; it reads TAVTMFELGGFIGALVAGWGS. The Cytoplasmic segment spans residues 311–322; that stretch reads DKLFNGNRGPMN. The chain crosses the membrane as a helical span at residues 323 to 343; it reads LIFAAGILLSVGSLWLMPFAS. Over 344–349 the chain is Periplasmic; it reads YVMQAT. The helical transmembrane segment at 350–370 threads the bilayer; the sequence is CFFTIGFFVFGPQMLIGMAAA. The Cytoplasmic portion of the chain corresponds to 371 to 379; it reads ECSHKEAAG. A helical transmembrane segment spans residues 380 to 400; the sequence is AATGFVGLFAYLGASLAGWPL. Residues 401–410 are Periplasmic-facing; it reads AKVLDTWHWS. Residues 411–431 traverse the membrane as a helical segment; that stretch reads GFFVVISIAAGISALLLLPFL. The Cytoplasmic portion of the chain corresponds to 432–439; sequence NAQTPREA.

It belongs to the major facilitator superfamily. Organophosphate:Pi antiporter (OPA) (TC 2.A.1.4) family.

It localises to the cell inner membrane. Functionally, part of the UhpABC signaling cascade that controls the expression of the hexose phosphate transporter UhpT. UhpC senses external glucose-6-phosphate and interacts with the histidine kinase UhpB, leading to the stimulation of the autokinase activity of UhpB. This chain is Membrane sensor protein UhpC, found in Escherichia coli (strain K12).